Here is a 153-residue protein sequence, read N- to C-terminus: MANSNLPRRIIKETQRLLSEPAPGISASPSEDNMRYFNVMILGPTQSPYEGGVFKLELFLPEEYPMAAPKVRFLTKIYHPNIDKLGRICLDILKDKWSPALQIRTVLLSIQALLSAPNPDDPLSENIAKHWKSNEAEAVDTAKEWTRLYASGA.

In terms of domain architecture, UBC core spans 5 to 151 (NLPRRIIKET…AKEWTRLYAS (147 aa)). C89 functions as the Glycyl thioester intermediate in the catalytic mechanism.

This sequence belongs to the ubiquitin-conjugating enzyme family. As to quaternary structure, interacts with yeast and human Mms2, with the RING domain of RGLG2 and with UEV1A, UEV1B, UEV1C and UEV1D. Ubiquitously expressed at low level. Mainly expressed in the vasculature.

The enzyme catalyses S-ubiquitinyl-[E1 ubiquitin-activating enzyme]-L-cysteine + [E2 ubiquitin-conjugating enzyme]-L-cysteine = [E1 ubiquitin-activating enzyme]-L-cysteine + S-ubiquitinyl-[E2 ubiquitin-conjugating enzyme]-L-cysteine.. It functions in the pathway protein modification; protein ubiquitination. Catalyzes the synthesis of non-canonical poly-ubiquitin chains that are linked through 'Lys-63'. This type of poly-ubiquitination does not lead to protein degradation by the proteasome. Mediates transcriptional activation of target genes. Required for postreplication repair of UV-damaged DNA and for adapting root developmental programs to suboptimal availability of iron. The sequence is that of Ubiquitin-conjugating enzyme E2 35 (UBC35) from Arabidopsis thaliana (Mouse-ear cress).